We begin with the raw amino-acid sequence, 82 residues long: Small ribosomal subunit protein bS16 (82 aa).

Belongs to the bacterial ribosomal protein bS16 family.

This chain is Small ribosomal subunit protein bS16, found in Salmonella agona (strain SL483).